The primary structure comprises 498 residues: Pre-glycoprotein polyprotein GP complex (498 aa).

G2 carries the N-myristoyl glycine; by host lipid modification. At 2 to 17 (GQIVTMFEALPHIIDE) the chain is on the extracellular side. Residues 18–33 (VINIVIIVLIIITSIK) traverse the membrane as a helical segment. The Cytoplasmic segment spans residues 34–58 (AVYNFATCGILALVSFLFLAGRSCG). Residue C57 participates in Zn(2+) binding. The Extracellular portion of the chain corresponds to 59–438 (MYGLNGPDIY…QGSTPLALMD (380 aa)). N85, N95, N114, N124, and N171 each carry an N-linked (GlcNAc...) asparagine; by host glycan. 6 cysteine pairs are disulfide-bonded: C92–C239, C123–C160, C184–C220, C285–C298, C307–C316, and C370–C391. N-linked (GlcNAc...) asparagine; by host glycosylation is present at N232. N371, N396, and N401 each carry an N-linked (GlcNAc...) asparagine; by host glycan. Residues 439–459 (LLMFSTSAYLISIFLHFVRIP) form a helical membrane-spanning segment. At 460–498 (THRHIKGGSCPKPHRLTNKGICSCGAFKVPGVKTIWKRR) the chain is on the cytoplasmic side. Zn(2+) contacts are provided by H461, H463, C469, H473, C481, and C483.

It belongs to the arenaviridae GPC protein family. Interacts with glycoprotein G2. Part of the GP complex (GP-C) together with glycoprotein G1 and glycoprotein G2. The GP-complex interacts with protein Z, which interacts with ribonucleocapsid; these interactions may induce virion budding. As to quaternary structure, homotrimer; disulfide-linked. In pre-fusion state, G1 homotrimers bind G2 homotrimers via ionic interactions. Part of the GP complex (GP-C) together with glycoprotein G2 and the stable signal peptide. Interacts with the primary host receptor DAG1 on the cell surface. The GP-complex interacts with protein Z, which interacts with ribonucleocapsid; these interactions may induce virion budding. In terms of assembly, homotrimer. Interacts with the stable signal peptide. In pre-fusion state, G2 homotrimers bind G1 homotrimers via ionic interactions. Part of the GP complex (GP-C) together with glycoprotein G1 and the stable signal peptide. Acidification in the endosome triggers rearrangements, which ultimately leads to a 6 helix bundle formed by the two heptad repeat domains (HR1 and HR2) in post-fusion state. The GP-complex interacts with protein Z, which interacts with ribonucleocapsid; these interactions may induce virion budding. Specific enzymatic cleavages in vivo yield mature proteins. GP-C polyprotein is cleaved in the endoplasmic reticulum by the host protease MBTPS1. Only cleaved glycoprotein is incorporated into virions. In terms of processing, the SSP remains stably associated with the GP complex following cleavage by signal peptidase and plays crucial roles in the trafficking of GP through the secretory pathway. Post-translationally, myristoylation is necessary for GP2-mediated fusion activity.

Its subcellular location is the virion membrane. It localises to the host endoplasmic reticulum membrane. The protein localises to the host Golgi apparatus membrane. It is found in the host cell membrane. Functionally, functions as a cleaved signal peptide that is retained as the third component of the GP complex (GP-C). Helps to stabilize the spike complex in its native conformation. The SSP is required for efficient glycoprotein expression, post-translational maturation cleavage of G1 and G2, glycoprotein transport to the cell surface plasma membrane, formation of infectious virus particles, and acid pH-dependent glycoprotein-mediated cell fusion. Its function is as follows. Forms the virion spikes together with glycoprotein G2. The glycoprotein spike trimers are connected to the underlying matrix. Interacts with the host receptor. Mediates virus attachment to the host primary receptor alpha-dystroglycan DAG1 (alpha-DG) at the cell surface. Down-modulates host DAG1. Forms the virion spikes together with glycoprotein G1. The glycoprotein spike trimers are connected to the underlying matrix. Class I viral fusion protein that directs fusion of viral and host endosomal membranes, leading to delivery of the nucleocapsid into the cytoplasm. Membrane fusion is mediated by irreversible conformational changes induced by acidification. The protein is Pre-glycoprotein polyprotein GP complex of Homo sapiens (Human).